We begin with the raw amino-acid sequence, 496 residues long: Lysine--tRNA ligase (496 aa).

Residues Glu409 and Glu416 each contribute to the Mg(2+) site.

It belongs to the class-II aminoacyl-tRNA synthetase family. In terms of assembly, homodimer. It depends on Mg(2+) as a cofactor.

Its subcellular location is the cytoplasm. The enzyme catalyses tRNA(Lys) + L-lysine + ATP = L-lysyl-tRNA(Lys) + AMP + diphosphate. This is Lysine--tRNA ligase from Streptococcus thermophilus (strain ATCC BAA-491 / LMD-9).